Reading from the N-terminus, the 427-residue chain is 3-phosphoshikimate 1-carboxyvinyltransferase (427 aa).

Lys-20, Ser-21, and Arg-25 together coordinate 3-phosphoshikimate. Lys-20 is a phosphoenolpyruvate binding site. Residues Gly-92 and Arg-120 each coordinate phosphoenolpyruvate. Positions 166, 168, 312, and 339 each coordinate 3-phosphoshikimate. Gln-168 contacts phosphoenolpyruvate. The active-site Proton acceptor is Asp-312. Positions 343 and 385 each coordinate phosphoenolpyruvate.

The protein belongs to the EPSP synthase family. In terms of assembly, monomer.

It localises to the cytoplasm. It carries out the reaction 3-phosphoshikimate + phosphoenolpyruvate = 5-O-(1-carboxyvinyl)-3-phosphoshikimate + phosphate. Its pathway is metabolic intermediate biosynthesis; chorismate biosynthesis; chorismate from D-erythrose 4-phosphate and phosphoenolpyruvate: step 6/7. Its function is as follows. Catalyzes the transfer of the enolpyruvyl moiety of phosphoenolpyruvate (PEP) to the 5-hydroxyl of shikimate-3-phosphate (S3P) to produce enolpyruvyl shikimate-3-phosphate and inorganic phosphate. This is 3-phosphoshikimate 1-carboxyvinyltransferase from Streptococcus pneumoniae serotype 2 (strain D39 / NCTC 7466).